Here is a 184-residue protein sequence, read N- to C-terminus: Phosphodiesterase YfcE (184 aa).

D9, H11, D37, N73, H105, H127, and H129 together coordinate Mn(2+).

This sequence belongs to the metallophosphoesterase superfamily. YfcE family. The cofactor is Mn(2+).

Functionally, shows phosphodiesterase activity. The polypeptide is Phosphodiesterase YfcE (yfcE) (Escherichia coli O157:H7).